The primary structure comprises 541 residues: GMP synthase [glutamine-hydrolyzing] (541 aa).

One can recognise a Glutamine amidotransferase type-1 domain in the interval 15–209; the sequence is TILTLDFGSQ…AVNICGCKQN (195 aa). The Nucleophile role is filled by Cys91. Catalysis depends on residues His183 and Glu185. Positions 210–416 constitute a GMPS ATP-PPase domain; it reads WTMARFVDQE…LGIAHEMVMR (207 aa). Residue 238–244 coordinates ATP; the sequence is SGGVDST. The XMP site is built by Arg311, Asp478, Lys533, and Glu539.

Homodimer. The cofactor is Mg(2+).

It localises to the cytoplasm. The protein resides in the cytosol. The enzyme catalyses XMP + L-glutamine + ATP + H2O = GMP + L-glutamate + AMP + diphosphate + 2 H(+). Its pathway is purine metabolism; GMP biosynthesis; GMP from XMP (L-Gln route): step 1/1. In terms of biological role, catalyzes the conversion of xanthine monophosphate (XMP) to GMP in the presence of glutamine and ATP through an adenyl-XMP intermediate. This is GMP synthase [glutamine-hydrolyzing] (gua1) from Aspergillus oryzae (strain ATCC 42149 / RIB 40) (Yellow koji mold).